The chain runs to 267 residues: MKKVTIRDFIKKKSMKEKITMLTAYDYPTAKIISNTTLDSILVGDSLGMVVLGYTNTLNVTMRDMISHTRAVARANPPQLIVSDMPFLSYEIDVKSAVKNAGLLVKAGSDAVKLEGGEEIKDIIRAIVKAGIPVMGHIGLTPQRFLRLGGFRTIGKTKQEEEQLIKDSLELEDAGVFSIVIENTYVDIAKRITEKLNVPTICIGAGPYCDGQVLVIHDLLGLSEVTPYFAKSYVNLKEIISSAINQYIIDVKTNKFPEKQHYKERES.

2 residues coordinate Mg(2+): D45 and D84. 3-methyl-2-oxobutanoate contacts are provided by residues 45–46, D84, and K113; that span reads DS. E115 serves as a coordination point for Mg(2+). E182 acts as the Proton acceptor in catalysis.

Belongs to the PanB family. Homodecamer; pentamer of dimers. The cofactor is Mg(2+).

The protein localises to the cytoplasm. It carries out the reaction 3-methyl-2-oxobutanoate + (6R)-5,10-methylene-5,6,7,8-tetrahydrofolate + H2O = 2-dehydropantoate + (6S)-5,6,7,8-tetrahydrofolate. Its pathway is cofactor biosynthesis; coenzyme A biosynthesis. Catalyzes the reversible reaction in which hydroxymethyl group from 5,10-methylenetetrahydrofolate is transferred onto alpha-ketoisovalerate to form ketopantoate. The chain is 3-methyl-2-oxobutanoate hydroxymethyltransferase from Saccharolobus solfataricus (strain ATCC 35092 / DSM 1617 / JCM 11322 / P2) (Sulfolobus solfataricus).